Reading from the N-terminus, the 532-residue chain is O-phosphoserine--tRNA(Cys) ligase (532 aa).

Residues 188–190 (HMT), 233–235 (SAS), 275–276 (YY), and Asn-327 each bind substrate.

The protein belongs to the class-II aminoacyl-tRNA synthetase family. O-phosphoseryl-tRNA(Cys) synthetase subfamily. In terms of assembly, homotetramer. Interacts with SepCysS.

The catalysed reaction is tRNA(Cys) + O-phospho-L-serine + ATP = O-phospho-L-seryl-tRNA(Cys) + AMP + diphosphate. In terms of biological role, catalyzes the attachment of O-phosphoserine (Sep) to tRNA(Cys). The sequence is that of O-phosphoserine--tRNA(Cys) ligase from Methanocella arvoryzae (strain DSM 22066 / NBRC 105507 / MRE50).